The primary structure comprises 447 residues: Imidazolonepropionase (447 aa).

His-85 and His-87 together coordinate Fe(3+). 2 residues coordinate Zn(2+): His-85 and His-87. 3 residues coordinate 4-imidazolone-5-propanoate: Arg-94, Tyr-157, and His-190. Residue Tyr-157 coordinates N-formimidoyl-L-glutamate. Fe(3+) is bound at residue His-255. His-255 serves as a coordination point for Zn(2+). Residue Glu-258 coordinates 4-imidazolone-5-propanoate. Asp-329 is a Fe(3+) binding site. Asp-329 serves as a coordination point for Zn(2+). Positions 331 and 333 each coordinate N-formimidoyl-L-glutamate. Residue Ser-334 coordinates 4-imidazolone-5-propanoate.

It belongs to the metallo-dependent hydrolases superfamily. HutI family. Requires Zn(2+) as cofactor. Fe(3+) is required as a cofactor.

Its subcellular location is the cytoplasm. The enzyme catalyses 4-imidazolone-5-propanoate + H2O = N-formimidoyl-L-glutamate. Its pathway is amino-acid degradation; L-histidine degradation into L-glutamate; N-formimidoyl-L-glutamate from L-histidine: step 3/3. Functionally, catalyzes the hydrolytic cleavage of the carbon-nitrogen bond in imidazolone-5-propanoate to yield N-formimidoyl-L-glutamate. It is the third step in the universal histidine degradation pathway. In Shouchella clausii (strain KSM-K16) (Alkalihalobacillus clausii), this protein is Imidazolonepropionase.